Consider the following 71-residue polypeptide: DNA-directed RNA polymerase subunit 10-like protein (71 aa).

Residues Cys-7, Cys-10, Cys-44, and Cys-45 each coordinate Zn(2+).

Belongs to the archaeal Rpo10/eukaryotic RPB10 RNA polymerase subunit family. Interacts with IYO.

The protein resides in the nucleus. The protein is DNA-directed RNA polymerase subunit 10-like protein of Arabidopsis thaliana (Mouse-ear cress).